The primary structure comprises 1623 residues: ABC transporter C family member 2 (1623 aa).

9 helical membrane-spanning segments follow: residues 37–57, 76–96, 109–129, 145–165, 172–192, 336–356, 440–460, 527–547, and 557–577; these read FVLG…IWLA, FLAL…IMGI, FEAF…VMIL, FAVI…LSVK, VLYL…LLFM, AWMG…GVLC, VASL…TVII, FILN…FTLL, and FTSL…PNII. The ABC transmembrane type-1 1 domain occupies 302 to 582; it reads FWWGGFWKIG…LPNIITQVVN (281 aa). Residues 614-838 enclose the ABC transporter 1 domain; that stretch reads ISIRNGYFSW…GPLFQRLMEN (225 aa). Position 649-656 (649-656) interacts with ATP; it reads GSTGEGKT. The interval 842–890 is disordered; that stretch reads VEEYSEENGEAEADQTAEQPVANGNTNGLQMDGSDDKKSKEGNKKGGKS. The segment covering 845 to 856 has biased composition (acidic residues); that stretch reads YSEENGEAEADQ. Over residues 857–870 the composition is skewed to polar residues; sequence TAEQPVANGNTNGL. The span at 875–885 shows a compositional bias: basic and acidic residues; that stretch reads SDDKKSKEGNK. 6 helical membrane-spanning segments follow: residues 914–934, 955–975, 1032–1054, 1058–1077, 1143–1163, and 1177–1197; these read ALGG…TEVF, GPLF…LVTL, AVFV…LIGI, LSLW…YLYY, LGIR…SFAV, and STMG…TGVL. The 285-residue stretch at 921–1205 folds into the ABC transmembrane type-1 2 domain; that stretch reads VMMLLLCYVL…VLRLASLAEN (285 aa). Residues 1236 to 1251 are interaction with calmodulin and FKP42/TWD1; it reads WPSSGSIKFEDVVLRY. The region spanning 1242–1476 is the ABC transporter 2 domain; that stretch reads IKFEDVVLRY…EGSSFSKMVQ (235 aa). 1276–1283 is a binding site for ATP; it reads GRTGAGKS.

This sequence belongs to the ABC transporter superfamily. ABCC family. Conjugate transporter (TC 3.A.1.208) subfamily. In terms of assembly, interacts with FKBP42/TWD1 and probably with calmodulin (CaM). Ubiquitous, at low levels.

Its subcellular location is the vacuole membrane. The catalysed reaction is ATP + H2O + xenobioticSide 1 = ADP + phosphate + xenobioticSide 2.. Its activity is regulated as follows. Reciprocal promotion of DNP-GS and E(2)17betaG uptake. E(2)17betaG uptake is also stimulated by GSH and S-methyl-glutathione (S-methyl-GS), and, to a lower extent, by GSSG and C3G-GS. Metolachlor-GS and decyl-GS slightly inhibit E(2)17betaG uptake. Pump for glutathione S-conjugates. Mediates the transport of S-conjugates such as GSH, S-(2,4-dinitrophenyl)-glutathione (DNP-GS), GSSG, cyanidin 3-glucoside-GS (C3G-GS) and metolachlor-GS (MOC-GS), glucuronides such as 17-beta-estradiol 17-(beta-D-glucuronide) (E(2)17betaG), and of the chlorophyll catabolite such as B.napus nonfluorescent chlorophyll catabolite (Bn-NCC-1). The sequence is that of ABC transporter C family member 2 (ABCC2) from Arabidopsis thaliana (Mouse-ear cress).